The sequence spans 396 residues: Putative pyridoxal phosphate-dependent acyltransferase (396 aa).

111 to 112 (GF) serves as a coordination point for pyridoxal 5'-phosphate. Histidine 136 is a substrate binding site. Pyridoxal 5'-phosphate-binding positions include serine 186, 211 to 214 (DDAH), and 241 to 244 (TLSK). Lysine 244 carries the N6-(pyridoxal phosphate)lysine modification. Threonine 358 serves as a coordination point for substrate.

The protein belongs to the class-II pyridoxal-phosphate-dependent aminotransferase family. In terms of assembly, homodimer. Requires pyridoxal 5'-phosphate as cofactor.

The chain is Putative pyridoxal phosphate-dependent acyltransferase from Bacillus anthracis.